The sequence spans 206 residues: MGRSKSSSRWLNEHHSDVYVKKSKEDGFRSRASYKLIELDRQDKLLRPGMTVIDLGAAPGGWSQVVADVVGDQGKVVACDLLSMDSIAGVTFFQGDFTEDEMLDAILNEVNSRPVDLVISDMAPNMSGMKSVDIPKAMYLVELALDLACRVLKKNGCFVAKVFQGEGFDQILQESRGRFSSVNIRKPDASRARSREIYLVAKGFRG.

Positions 60, 62, 80, 96, and 121 each coordinate S-adenosyl-L-methionine. Lys161 serves as the catalytic Proton acceptor.

This sequence belongs to the class I-like SAM-binding methyltransferase superfamily. RNA methyltransferase RlmE family.

Its subcellular location is the cytoplasm. It catalyses the reaction uridine(2552) in 23S rRNA + S-adenosyl-L-methionine = 2'-O-methyluridine(2552) in 23S rRNA + S-adenosyl-L-homocysteine + H(+). In terms of biological role, specifically methylates the uridine in position 2552 of 23S rRNA at the 2'-O position of the ribose in the fully assembled 50S ribosomal subunit. This Hahella chejuensis (strain KCTC 2396) protein is Ribosomal RNA large subunit methyltransferase E.